Consider the following 388-residue polypeptide: Serpin B11 (388 aa).

Positions 338–362 are RCL; the sequence is EEGTEAAAATGESISVKRLPVTVQF.

This sequence belongs to the serpin family. Ov-serpin subfamily. In terms of tissue distribution, expressed in eye, lung, lymphocytes, thymus, stomach, uterus, heart, brain, liver, skeletal muscle, and in day 7, 15, and 17 embryos.

The protein resides in the cytoplasm. Functionally, inhibitor of serine proteases. Has moderate inhibitory activity for trypsin-like peptidases, but also some activity with cysteine peptidases, cathepsin L, K, and V, and the serine peptidase, tryptase gamma. In Mus musculus (Mouse), this protein is Serpin B11 (Serpinb11).